A 63-amino-acid chain; its full sequence is Conotoxin Cal12.5 (63 aa).

An N-terminal signal peptide occupies residues 1-21 (MKVTCVLVVLLLLLPYGDLLG).

It belongs to the conotoxin O1 superfamily. Contains 4 disulfide bonds. Expressed by the venom duct.

It localises to the secreted. Probable neurotoxin. The sequence is that of Conotoxin Cal12.5 from Californiconus californicus (California cone).